A 490-amino-acid polypeptide reads, in one-letter code: Betaine aldehyde dehydrogenase (490 aa).

The K(+) site is built by T26 and D93. 150-152 (GAW) lines the NAD(+) pocket. K162 functions as the Charge relay system in the catalytic mechanism. 176-179 (KPSE) contacts NAD(+). A K(+)-binding site is contributed by V180. 230–233 (GVAT) is an NAD(+) binding site. L246 serves as a coordination point for K(+). E252 acts as the Proton acceptor in catalysis. NAD(+)-binding residues include G254, C286, and E387. The Nucleophile role is filled by C286. At C286 the chain carries Cysteine sulfenic acid (-SOH). 2 residues coordinate K(+): K457 and G460. E464 functions as the Charge relay system in the catalytic mechanism.

The protein belongs to the aldehyde dehydrogenase family. Dimer of dimers. The cofactor is K(+).

It catalyses the reaction betaine aldehyde + NAD(+) + H2O = glycine betaine + NADH + 2 H(+). Its pathway is amine and polyamine biosynthesis; betaine biosynthesis via choline pathway; betaine from betaine aldehyde: step 1/1. In terms of biological role, involved in the biosynthesis of the osmoprotectant glycine betaine. Catalyzes the irreversible oxidation of betaine aldehyde to the corresponding acid. The protein is Betaine aldehyde dehydrogenase of Stenotrophomonas maltophilia (strain R551-3).